The following is a 366-amino-acid chain: tRNA(Met) cytidine acetate ligase (366 aa).

Residues 7–20, glycine 96, asparagine 152, and arginine 175 each bind ATP; that span reads VAEF…HKYL.

It belongs to the TmcAL family.

The protein resides in the cytoplasm. It catalyses the reaction cytidine(34) in elongator tRNA(Met) + acetate + ATP = N(4)-acetylcytidine(34) in elongator tRNA(Met) + AMP + diphosphate. Functionally, catalyzes the formation of N(4)-acetylcytidine (ac(4)C) at the wobble position of elongator tRNA(Met), using acetate and ATP as substrates. First activates an acetate ion to form acetyladenylate (Ac-AMP) and then transfers the acetyl group to tRNA to form ac(4)C34. This chain is tRNA(Met) cytidine acetate ligase, found in Streptococcus uberis (strain ATCC BAA-854 / 0140J).